The following is a 127-amino-acid chain: Mitochondrial pyruvate carrier 2 (127 aa).

Over 2-40 (SAAGARGLRATYHRLLDKVELMLPEKLRPLYNHPAGPRT) the chain is Mitochondrial matrix. Residues 41–61 (VFFWAPIMKRGLVCAGLADMA) traverse the membrane as a helical segment. The Mitochondrial intermembrane segment spans residues 62–72 (RPAEKLSTAQS). A helical membrane pass occupies residues 73-90 (AVLMATGFIWSRYSLVII). The Mitochondrial matrix portion of the chain corresponds to 91-95 (PKNWS). Residues 96–115 (LFAVNFFVGAAGASQLFRIW) form a helical membrane-spanning segment. The Mitochondrial intermembrane portion of the chain corresponds to 116–127 (RYNQELKAKAHK).

The protein belongs to the mitochondrial pyruvate carrier (MPC) (TC 2.A.105) family. Homodimer. Homooligomer. Forms heterodimers with MPC1 and MPC1L. The heterodimer is the more stable and dominant form.

It localises to the mitochondrion inner membrane. It catalyses the reaction pyruvate(out) + H(+)(out) = pyruvate(in) + H(+)(in). In terms of biological role, mediates the uptake of pyruvate into mitochondria. This Pongo abelii (Sumatran orangutan) protein is Mitochondrial pyruvate carrier 2 (MPC2).